A 140-amino-acid chain; its full sequence is Small ribosomal subunit protein uS19 (140 aa).

The protein belongs to the universal ribosomal protein uS19 family.

Functionally, protein S19 forms a complex with S13 that binds strongly to the 16S ribosomal RNA. The sequence is that of Small ribosomal subunit protein uS19 from Natronomonas pharaonis (strain ATCC 35678 / DSM 2160 / CIP 103997 / JCM 8858 / NBRC 14720 / NCIMB 2260 / Gabara) (Halobacterium pharaonis).